The following is a 200-amino-acid chain: Cuticle protein 21.3 (200 aa).

Tandem repeats lie at residues 98–101 (AAPA), 104–107 (AAPA), 116–119 (AAPA), 121–124 (AAPA), 133–136 (AAPA), 154–157 (AAPA), 166–169 (AAPA), 178–181 (AAPA), 184–187 (AAPA), and 196–199 (AAPA).

In terms of biological role, component of the cuticle of migratory locust which contains more than 100 different structural proteins. This Locusta migratoria (Migratory locust) protein is Cuticle protein 21.3.